The following is a 486-amino-acid chain: Protein nucleotidyltransferase YdiU (486 aa).

Residues Gly90, Gly92, Arg93, Lys113, Asp125, Gly126, Arg176, and Arg183 each coordinate ATP. Asp252 (proton acceptor) is an active-site residue. Mg(2+) contacts are provided by Asn253 and Asp262. Position 262 (Asp262) interacts with ATP.

The protein belongs to the SELO family. Mg(2+) is required as a cofactor. Mn(2+) serves as cofactor.

It catalyses the reaction L-seryl-[protein] + ATP = 3-O-(5'-adenylyl)-L-seryl-[protein] + diphosphate. The enzyme catalyses L-threonyl-[protein] + ATP = 3-O-(5'-adenylyl)-L-threonyl-[protein] + diphosphate. The catalysed reaction is L-tyrosyl-[protein] + ATP = O-(5'-adenylyl)-L-tyrosyl-[protein] + diphosphate. It carries out the reaction L-histidyl-[protein] + UTP = N(tele)-(5'-uridylyl)-L-histidyl-[protein] + diphosphate. It catalyses the reaction L-seryl-[protein] + UTP = O-(5'-uridylyl)-L-seryl-[protein] + diphosphate. The enzyme catalyses L-tyrosyl-[protein] + UTP = O-(5'-uridylyl)-L-tyrosyl-[protein] + diphosphate. Nucleotidyltransferase involved in the post-translational modification of proteins. It can catalyze the addition of adenosine monophosphate (AMP) or uridine monophosphate (UMP) to a protein, resulting in modifications known as AMPylation and UMPylation. In Stutzerimonas stutzeri (strain A1501) (Pseudomonas stutzeri), this protein is Protein nucleotidyltransferase YdiU.